Here is a 219-residue protein sequence, read N- to C-terminus: Large ribosomal subunit protein bL25 (219 aa).

The disordered stretch occupies residues 176–219 (VTVVPPTDEPSEEEVEAMEGESATEEPEVVGEDKEDDEEENKED). Positions 184 to 219 (EPSEEEVEAMEGESATEEPEVVGEDKEDDEEENKED) are enriched in acidic residues.

This sequence belongs to the bacterial ribosomal protein bL25 family. CTC subfamily. Part of the 50S ribosomal subunit; part of the 5S rRNA/L5/L18/L25 subcomplex. Contacts the 5S rRNA. Binds to the 5S rRNA independently of L5 and L18.

Its function is as follows. This is one of the proteins that binds to the 5S RNA in the ribosome where it forms part of the central protuberance. In Staphylococcus epidermidis (strain ATCC 35984 / DSM 28319 / BCRC 17069 / CCUG 31568 / BM 3577 / RP62A), this protein is Large ribosomal subunit protein bL25.